The primary structure comprises 437 residues: U1 small nuclear ribonucleoprotein 70 kDa (437 aa).

Residue Thr-2 is modified to N-acetylthreonine. The tract at residues 48–79 (FEDPRDAPPPTRAETREERMERKRREKIERRQ) is disordered. Over residues 60–79 (AETREERMERKRREKIERRQ) the composition is skewed to basic and acidic residues. Residues 92–202 (HNDPNAQGDA…GGGLGGTRRG (111 aa)) form a required for interaction with U1 RNA region. Positions 103 to 181 (KTLFVARVNY…RRVLVDVERG (79 aa)) constitute an RRM domain. Lys-118 bears the N6-acetyllysine mark. Tyr-126 is modified (phosphotyrosine). A disordered region spans residues 187–437 (WRPRRLGGGL…NGYLMEAAPE (251 aa)). Gly residues predominate over residues 192–201 (LGGGLGGTRR). Over residues 207–254 (NIRHSGRDDTSRYDERPGPSPLPHRDRDRDRERERRERSRERDKERER) the composition is skewed to basic and acidic residues. Phosphoserine is present on residues Ser-226 and Ser-268. Residues 255-268 (RRSRSRDRRRRSRS) show a composition bias toward basic residues. 2 stretches are compositionally biased toward basic and acidic residues: residues 269–286 (RDKE…DKDR) and 294–310 (RSRE…EELR). Ser-320 is subject to Phosphoserine. A compositionally biased stretch (basic and acidic residues) spans 343 to 393 (PEEKGRDRDRERRRSHRSERERRRDRDRDRDRDREHKRGERGSERGRDEAR). A Glycyl lysine isopeptide (Lys-Gly) (interchain with G-Cter in SUMO2) cross-link involves residue Lys-346. Ser-410 carries the phosphoserine modification.

Component of the U1 snRNP. The U1 snRNP is composed of the U1 snRNA and the 7 core Sm proteins SNRPB, SNRPD1, SNRPD2, SNRPD3, SNRPE, SNRPF and SNRPG that assemble in a heptameric protein ring on the Sm site of the small nuclear RNA to form the core snRNP, and at least three U1 snRNP-specific proteins SNRNP70/U1-70K, SNRPA/U1-A and SNRPC/U1-C. Interacts with SCNM1. Found in a pre-mRNA splicing complex with SFRS4, SFRS5, SNRNP70, SNRPA1, SRRM1 and SRRM2. Found in a pre-mRNA exonic splicing enhancer (ESE) complex with SNRNP70, SNRPA1, SRRM1 and TRA2B/SFRS10. Interacts with dephosphorylated SFRS13A and SFPQ. Interacts with NUDT21/CPSF5, CPSF6, SCAF11, and ZRANB2. Interacts with GEMIN5. Interacts with FUS. The N-terminus is blocked. Post-translationally, extensively phosphorylated on serine residues in the C-terminal region.

The protein resides in the nucleus speckle. It localises to the nucleus. It is found in the nucleoplasm. Component of the spliceosomal U1 snRNP, which is essential for recognition of the pre-mRNA 5' splice-site and the subsequent assembly of the spliceosome. SNRNP70 binds to the loop I region of U1-snRNA. Functionally, truncated isoforms that lack the RRM domain cannot bind U1-snRNA. This chain is U1 small nuclear ribonucleoprotein 70 kDa (SNRNP70), found in Homo sapiens (Human).